A 254-amino-acid polypeptide reads, in one-letter code: Guanylate kinase (254 aa).

The Guanylate kinase-like domain occupies 64-243; it reads KHLVVLAGPT…AAREVVDLMM (180 aa). 71–78 lines the ATP pocket; the sequence is GPTAVGKG.

Belongs to the guanylate kinase family.

The protein resides in the cytoplasm. It carries out the reaction GMP + ATP = GDP + ADP. Its function is as follows. Essential for recycling GMP and indirectly, cGMP. In Leifsonia xyli subsp. xyli (strain CTCB07), this protein is Guanylate kinase.